A 303-amino-acid polypeptide reads, in one-letter code: MKVIFMGTPEFAVPALKKLITHHEVKAVFTQQPKAKGRGLNLAKSPIHQLAFEHQIPVYTPSTLRNDEIINLINKVNADIIVVIAYGFIVPKAILEAKKYGCLNIHPSDLPRHRGAAPLQRTIIEGDRKSSVCIMRMDTGLDTGDILMKEDFDLEERITLEELHNKCANLGAELLIKTLANIDNIVPITQPSDGVTYAHKLTKAEGKINWHESAYKIDCKIRGMNPWPGVYFSYNDKIIKILEAEYLNADHHFTSGTVISDKLEIACGSGILRVKKLQQESKKALSIEEFLRGTNILKDTVLK.

108–111 (SDLP) is a (6S)-5,6,7,8-tetrahydrofolate binding site.

This sequence belongs to the Fmt family.

It catalyses the reaction L-methionyl-tRNA(fMet) + (6R)-10-formyltetrahydrofolate = N-formyl-L-methionyl-tRNA(fMet) + (6S)-5,6,7,8-tetrahydrofolate + H(+). Functionally, attaches a formyl group to the free amino group of methionyl-tRNA(fMet). The formyl group appears to play a dual role in the initiator identity of N-formylmethionyl-tRNA by promoting its recognition by IF2 and preventing the misappropriation of this tRNA by the elongation apparatus. This is Methionyl-tRNA formyltransferase from Rickettsia rickettsii (strain Iowa).